We begin with the raw amino-acid sequence, 290 residues long: UPF0750 membrane protein YpjC (290 aa).

A run of 6 helical transmembrane segments spans residues 9–29, 47–67, 75–95, 106–126, 146–166, and 179–199; these read NIFF…HFNM, ALFH…IFFI, TMFV…SIFQ, DLAL…GIIF, FGIP…ILSL, and LVAV…GYAA.

The protein belongs to the UPF0750 family.

The protein resides in the cell membrane. This chain is UPF0750 membrane protein YpjC (ypjC), found in Bacillus subtilis (strain 168).